A 445-amino-acid polypeptide reads, in one-letter code: Gamma-glutamyl phosphate reductase (445 aa).

Belongs to the gamma-glutamyl phosphate reductase family.

Its subcellular location is the cytoplasm. The catalysed reaction is L-glutamate 5-semialdehyde + phosphate + NADP(+) = L-glutamyl 5-phosphate + NADPH + H(+). It functions in the pathway amino-acid biosynthesis; L-proline biosynthesis; L-glutamate 5-semialdehyde from L-glutamate: step 2/2. Its function is as follows. Catalyzes the NADPH-dependent reduction of L-glutamate 5-phosphate into L-glutamate 5-semialdehyde and phosphate. The product spontaneously undergoes cyclization to form 1-pyrroline-5-carboxylate. This chain is Gamma-glutamyl phosphate reductase, found in Saccharopolyspora erythraea (strain ATCC 11635 / DSM 40517 / JCM 4748 / NBRC 13426 / NCIMB 8594 / NRRL 2338).